Here is a 369-residue protein sequence, read N- to C-terminus: Fructose-bisphosphate aldolase (369 aa).

A dihydroxyacetone phosphate-binding site is contributed by Asp-40. Residues Ser-42 and Thr-45 each coordinate D-glyceraldehyde 3-phosphate. Arg-49 is a binding site for beta-D-fructose 1,6-bisphosphate. Lys-113 is a D-glyceraldehyde 3-phosphate binding site. A dihydroxyacetone phosphate-binding site is contributed by Lys-152. Glu-195 contacts D-glyceraldehyde 3-phosphate. Glu-195 (proton acceptor) is an active-site residue. Positions 237, 279, and 280 each coordinate dihydroxyacetone phosphate. Lys-237 acts as the Schiff-base intermediate with dihydroxyacetone phosphate in catalysis. Beta-D-fructose 1,6-bisphosphate contacts are provided by residues 279-281 (SGG) and Ser-307. Dihydroxyacetone phosphate is bound by residues Gly-309 and Arg-310. Beta-D-fructose 1,6-bisphosphate is bound at residue Arg-310.

This sequence belongs to the class I fructose-bisphosphate aldolase family. Homotetramer. Interacts with TRAP (via cytoplasmic domain); the interaction prevents substrate binding and thereby inhibits aldolase activity. Interacts with MTRAP (via cytoplasmic domain); MTRAP phosphorylation may increase the binding to FBPA. Interact with RH1 (via cytoplasmic domain). Interacts with RH2b (via cytoplasmic domain). Interacts with RH4 (via cytoplasmic domain). Interacts with AMA1 (via cytoplasmic domain); the interaction is weak, however it may be increased upon AMA1 phosphorylation. Interacts with EBA140 (via cytoplasmic domain); the interaction is weak. Interacts with EBA175 (via cytoplasmic domain); the interaction is weak. Interacts with EBA181 (via cytoplasmic domain); the interaction is weak. Interacts with G-actin and F-actin. May interact with ACT2/actin II; the interaction inhibits FBPA catalytic activity. Interacts with human SLC4A1/band 3 (via N-terminus); the interaction inhibits FBPA catalytic activity.

The protein resides in the cytoplasm. It localises to the membrane. It is found in the host cell membrane. The catalysed reaction is beta-D-fructose 1,6-bisphosphate = D-glyceraldehyde 3-phosphate + dihydroxyacetone phosphate. The protein operates within carbohydrate degradation; glycolysis; D-glyceraldehyde 3-phosphate and glycerone phosphate from D-glucose: step 4/4. The cytoplasmic tail of TRAP and probably other adhesins acts as a competitive inhibitor as the binding sites of the glycolytic substrate fructose 1,6-bisphosphate and TRAP partially overlap. Functionally, plays a key role in glycolysis by catalyzing the cleavage of fructose 1,6-bisphosphate into dihydroxyacetone phosphate and glyceraldehyde 3-phosphate. Independently of its catalytic activity, connects the actin filaments, and thus the actomyosin motor, to cell surface adhesins of the thrombospondin-related anonymous protein (TRAP), the erythrocyte binding ligand (EBL) and reticulocyte binding homolog (RH) protein families; this interaction is probably involved in transducing the motor force across the parasite surface required for sporozoite and ookinete gliding motility and merozoite invasion. Stimulates actin polymerisation. The protein is Fructose-bisphosphate aldolase of Plasmodium falciparum (isolate 3D7).